Here is a 539-residue protein sequence, read N- to C-terminus: Phosphoenolpyruvate carboxykinase (ATP) (539 aa).

Positions 64, 206, and 212 each coordinate substrate. ATP-binding positions include Lys212, His231, and 247 to 255 (GLSGTGKTT). 2 residues coordinate Mn(2+): Lys212 and His231. Asp268 is a Mn(2+) binding site. Residues Glu296, Arg332, 448–449 (RI), and Thr454 contribute to the ATP site. Position 332 (Arg332) interacts with substrate.

This sequence belongs to the phosphoenolpyruvate carboxykinase (ATP) family. As to quaternary structure, monomer. Mn(2+) is required as a cofactor.

Its subcellular location is the cytoplasm. It carries out the reaction oxaloacetate + ATP = phosphoenolpyruvate + ADP + CO2. Its pathway is carbohydrate biosynthesis; gluconeogenesis. Its function is as follows. Involved in the gluconeogenesis. Catalyzes the conversion of oxaloacetate (OAA) to phosphoenolpyruvate (PEP) through direct phosphoryl transfer between the nucleoside triphosphate and OAA. In Salmonella choleraesuis (strain SC-B67), this protein is Phosphoenolpyruvate carboxykinase (ATP).